Reading from the N-terminus, the 527-residue chain is Protein TIC 56, chloroplastic (527 aa).

Residues 1 to 48 (MSSMNFNPFQNWFEKPPNPVPSINFVSLADSFFPKSQSPNFASIGLPK) constitute a chloroplast transit peptide. The segment at 43–67 (SIGLPKFSKKSPKPETAGTDEPGPY) is disordered. A Deamidated asparagine modification is found at Asn350. The span at 491 to 508 (RREEELREEDLKHYSGRT) shows a compositional bias: basic and acidic residues. The disordered stretch occupies residues 491 to 527 (RREEELREEDLKHYSGRTDEDEEEEEEEDDDSNSKKD). Residues 509–521 (DEDEEEEEEEDDD) are compositionally biased toward acidic residues.

In terms of assembly, part of the Tic complex. Component of the 1-MD complex, composed of TIC20-I, TIC214, TIC100 and TIC56. Interacts with the translocating preproteins. Hydrolysis of ATP is essential for the formation of this complex. The 1-MD complex interacts with TIC21.

The protein localises to the plastid. Its subcellular location is the chloroplast inner membrane. Its function is as follows. Involved in protein precursor import into chloroplasts. May be part of an intermediate translocation complex acting as a protein-conducting channel at the inner envelope. The sequence is that of Protein TIC 56, chloroplastic from Arabidopsis thaliana (Mouse-ear cress).